We begin with the raw amino-acid sequence, 102 residues long: Small ribosomal subunit protein uS10 (102 aa).

Belongs to the universal ribosomal protein uS10 family. As to quaternary structure, part of the 30S ribosomal subunit.

In terms of biological role, involved in the binding of tRNA to the ribosomes. This chain is Small ribosomal subunit protein uS10, found in Frankia alni (strain DSM 45986 / CECT 9034 / ACN14a).